The chain runs to 908 residues: Transferrin-binding protein A (908 aa).

The first 24 residues, 1–24, serve as a signal peptide directing secretion; sequence MQQQHLFRLNILCLSLMTALPVYA. A TonB box motif is present at residues 38 to 45; that stretch reads DTIQVKAK. In terms of domain architecture, TBDR plug spans 51–176; it reads RDNEVTGLGK…LAGSVAFQTK (126 aa). The region spanning 187–908 is the TBDR beta-barrel domain; sequence QWGIQSKTAY…NYTFSLEMKF (722 aa). Residues 891–908 carry the TonB C-terminal box motif; it reads NRYAAPGRNYTFSLEMKF.

It belongs to the TonB-dependent receptor family. As to quaternary structure, binds both human apo- and holo-transferrin (TF), via the TF C-terminus. Forms a large complex with TF and TbpB.

It is found in the cell outer membrane. Its function is as follows. Neisseria acquires iron by extracting it from serum transferrin (TF) in its human host. Acts as a TF receptor and is required for TF utilization. Binds both apo- and holo-TF, via the TF C-terminus. This chain is Transferrin-binding protein A, found in Neisseria meningitidis serogroup B.